A 332-amino-acid chain; its full sequence is tRNA dimethylallyltransferase (332 aa).

14–21 (GPTASGKT) lines the ATP pocket. Residue 16–21 (TASGKT) coordinates substrate. The interval 39–42 (DSMQ) is interaction with substrate tRNA. The segment at 312–332 (NKRSSNHDCKRKHPRPSTREL) is disordered. A compositionally biased stretch (basic residues) spans 320–332 (CKRKHPRPSTREL).

Belongs to the IPP transferase family. Monomer. The cofactor is Mg(2+).

The enzyme catalyses adenosine(37) in tRNA + dimethylallyl diphosphate = N(6)-dimethylallyladenosine(37) in tRNA + diphosphate. Catalyzes the transfer of a dimethylallyl group onto the adenine at position 37 in tRNAs that read codons beginning with uridine, leading to the formation of N6-(dimethylallyl)adenosine (i(6)A). This is tRNA dimethylallyltransferase from Staphylococcus epidermidis (strain ATCC 35984 / DSM 28319 / BCRC 17069 / CCUG 31568 / BM 3577 / RP62A).